The sequence spans 423 residues: T-box transcription factor T-A (423 aa).

The T-box DNA-binding region spans 44-212 (LWTKFKELTN…HNPFAKAFLD (169 aa)). Positions 215 to 227 (ERSDHKEVPDHST) are enriched in basic and acidic residues. Disordered stretches follow at residues 215–234 (ERSD…QSGY) and 280–304 (AAPY…SSGS). The span at 290–304 (RSTTTNNYMDNSSGS) shows a compositional bias: polar residues.

In terms of assembly, monomer. Binds DNA as a monomer. In terms of tissue distribution, first expressed at the dorsal side of the blastula embryo. Expressed in the germ ring, shield and chordamesoderm during gastrulation and is restricted to the notochord and tailbud during somitogenesis (at protein level).

Its subcellular location is the nucleus. In terms of biological role, involved in the transcriptional regulation of genes required for mesoderm differentiation, including itself. Indispensable for the formation of the notochord and the tail structure. Functions together with tbx16/spadetail in development of trunk and tail mesoderm. Functions by itself early in development to repress medial floor plate and promote notochord fate but at later times, functions together with tbx16/spadetail to promote medial floor plate formation. Acts in a parallel pathway to, but cooperates with, non-canonical wnt-signaling during tail formation. Required for the morphogenesis of Kupffer's vesicle and regulates left-right asymmetry. The sequence is that of T-box transcription factor T-A (tbxta) from Danio rerio (Zebrafish).